A 345-amino-acid polypeptide reads, in one-letter code: Anthranilate phosphoribosyltransferase (345 aa).

5-phospho-alpha-D-ribose 1-diphosphate is bound by residues Gly81, 84–85, Ser89, 91–94, 109–117, and Ala121; these read GD, NVST, and KHGNRAATS. Gly81 is a binding site for anthranilate. Ser93 is a Mg(2+) binding site. Asn112 contacts anthranilate. Residue Arg167 participates in anthranilate binding. Mg(2+)-binding residues include Asp226 and Glu227.

Belongs to the anthranilate phosphoribosyltransferase family. Homodimer. Mg(2+) serves as cofactor.

The enzyme catalyses N-(5-phospho-beta-D-ribosyl)anthranilate + diphosphate = 5-phospho-alpha-D-ribose 1-diphosphate + anthranilate. It participates in amino-acid biosynthesis; L-tryptophan biosynthesis; L-tryptophan from chorismate: step 2/5. Catalyzes the transfer of the phosphoribosyl group of 5-phosphorylribose-1-pyrophosphate (PRPP) to anthranilate to yield N-(5'-phosphoribosyl)-anthranilate (PRA). In Methylobacterium radiotolerans (strain ATCC 27329 / DSM 1819 / JCM 2831 / NBRC 15690 / NCIMB 10815 / 0-1), this protein is Anthranilate phosphoribosyltransferase.